A 107-amino-acid polypeptide reads, in one-letter code: Protein Asterix (107 aa).

The span at 1-15 (MSHSHGNASSVNDPR) shows a compositional bias: polar residues. Residues 1 to 25 (MSHSHGNASSVNDPRQPSAAKPYIP) form a disordered region. A helical transmembrane segment spans residues 82-98 (ISMAMMFAIMGLVTNYL).

This sequence belongs to the Asterix family.

It is found in the membrane. The protein is Protein Asterix of Arabidopsis thaliana (Mouse-ear cress).